A 393-amino-acid chain; its full sequence is Dual-specificity RNA methyltransferase RlmN (393 aa).

E114 serves as the catalytic Proton acceptor. The Radical SAM core domain occupies 120–359 (EGDRATLCVS…VIVRKTRGDD (240 aa)). Residues C127 and C364 are joined by a disulfide bond. The [4Fe-4S] cluster site is built by C134, C138, and C141. S-adenosyl-L-methionine-binding positions include 188-189 (GE), S220, 242-244 (SLH), and N321. The active-site S-methylcysteine intermediate is the C364.

This sequence belongs to the radical SAM superfamily. RlmN family. It depends on [4Fe-4S] cluster as a cofactor.

It localises to the cytoplasm. It catalyses the reaction adenosine(2503) in 23S rRNA + 2 reduced [2Fe-2S]-[ferredoxin] + 2 S-adenosyl-L-methionine = 2-methyladenosine(2503) in 23S rRNA + 5'-deoxyadenosine + L-methionine + 2 oxidized [2Fe-2S]-[ferredoxin] + S-adenosyl-L-homocysteine. The catalysed reaction is adenosine(37) in tRNA + 2 reduced [2Fe-2S]-[ferredoxin] + 2 S-adenosyl-L-methionine = 2-methyladenosine(37) in tRNA + 5'-deoxyadenosine + L-methionine + 2 oxidized [2Fe-2S]-[ferredoxin] + S-adenosyl-L-homocysteine. Its function is as follows. Specifically methylates position 2 of adenine 2503 in 23S rRNA and position 2 of adenine 37 in tRNAs. m2A2503 modification seems to play a crucial role in the proofreading step occurring at the peptidyl transferase center and thus would serve to optimize ribosomal fidelity. The protein is Dual-specificity RNA methyltransferase RlmN of Haemophilus ducreyi (strain 35000HP / ATCC 700724).